The primary structure comprises 502 residues: Glycerol kinase (502 aa).

Residue threonine 13 participates in ADP binding. ATP-binding residues include threonine 13, threonine 14, and serine 15. Position 13 (threonine 13) interacts with sn-glycerol 3-phosphate. Arginine 17 provides a ligand contact to ADP. The sn-glycerol 3-phosphate site is built by arginine 83, glutamate 84, tyrosine 136, and aspartate 246. The glycerol site is built by arginine 83, glutamate 84, tyrosine 136, aspartate 246, and glutamine 247. Residues threonine 268 and glycine 311 each contribute to the ADP site. ATP-binding residues include threonine 268, glycine 311, glutamine 315, and glycine 412. Glycine 412 and asparagine 416 together coordinate ADP.

Belongs to the FGGY kinase family.

The catalysed reaction is glycerol + ATP = sn-glycerol 3-phosphate + ADP + H(+). It participates in polyol metabolism; glycerol degradation via glycerol kinase pathway; sn-glycerol 3-phosphate from glycerol: step 1/1. Its activity is regulated as follows. Inhibited by fructose 1,6-bisphosphate (FBP). In terms of biological role, key enzyme in the regulation of glycerol uptake and metabolism. Catalyzes the phosphorylation of glycerol to yield sn-glycerol 3-phosphate. This chain is Glycerol kinase, found in Francisella tularensis subsp. tularensis (strain WY96-3418).